The sequence spans 864 residues: Disintegrin and metalloproteinase domain-containing protein 15 (864 aa).

An N-terminal signal peptide occupies residues 1–17 (MRLALLWALGLLGAGSP). Residues 18–45 (RPSPPLPNIGGTEEEQQASPERTLSGSM) form a disordered region. A propeptide spanning residues 18 to 207 (RPSPPLPNIG…EQHHAHRLKR (190 aa)) is cleaved from the precursor. A compositionally biased stretch (polar residues) spans 34-45 (QASPERTLSGSM). Residues 177–184 (HTCAPSWH) carry the Cysteine switch motif. Cys179 serves as a coordination point for Zn(2+). Residues 208-696 (DVVTETKIVE…TQLKATSSLT (489 aa)) are Extracellular-facing. Positions 214-415 (KIVELVIVAD…GMGSCLFERQ (202 aa)) constitute a Peptidase M12B domain. Asn238 is a glycosylation site (N-linked (GlcNAc...) asparagine). Disulfide bonds link Cys324-Cys410, Cys366-Cys394, Cys368-Cys377, and Cys481-Cys501. A Zn(2+)-binding site is contributed by His349. Glu350 is an active-site residue. Zn(2+) contacts are provided by His353 and His359. N-linked (GlcNAc...) asparagine glycosylation is found at Asn390 and Asn393. One can recognise a Disintegrin domain in the interval 422-509 (SSLCGNMFVD…QCPSDIRLGD (88 aa)). Asn607 and Asn612 each carry an N-linked (GlcNAc...) asparagine glycan. 3 disulfides stabilise this stretch: Cys658–Cys668, Cys662–Cys674, and Cys676–Cys685. In terms of domain architecture, EGF-like spans 658-686 (CRRKCHGHGVCDSSGHCRCEEGWAPPDCM). Residues 697 to 717 (TGLLLSLLLLLVLVLLGASYW) traverse the membrane as a helical segment. Residues Tyr716 and Tyr736 each carry the phosphotyrosine; by HCK and LCK modification. Over 718–864 (HRARLHQRLC…PPPAASSLYL (147 aa)) the chain is Cytoplasmic. Positions 736 to 864 (YRAPQSCPPE…PPPAASSLYL (129 aa)) are disordered. Residues 741–750 (SCPPERPGPP) are compositionally biased toward pro residues. Residues 752-762 (RAQQMTGTKQA) show a composition bias toward polar residues. Pro residues-rich tracts occupy residues 768-780 (PVPPSRPLPPNPV) and 814-825 (TKPPPPRKPLPA). 2 consecutive short sequence motifs (SH3-binding) follow at residues 816-822 (PPPPRKP) and 851-857 (RPAPPPP).

In terms of assembly, interacts specifically with Src family protein-tyrosine kinases (PTKs). Interacts with ITAGV-ITGB3 (vitronectin receptor). Interacts with SH3GL2 and SNX9; this interaction occurs preferentially with ADAM15 precursor, rather than the processed form, suggesting it occurs in a secretory pathway compartment prior to the medial Golgi. Interacts with ITAG9-ITGB1. Interacts with SH3PXD2A. Interacts with ITAGV-ITGB1. Interacts with GRB2, HCK, ITSN1, ITSN2, LYN, MAPK1, MAPK3, NCF1, NCK1, nephrocystin, PTK6, SNX33, LCK and SRC. The cofactor is Zn(2+). Post-translationally, the precursor is cleaved by a furin endopeptidase. An additional membrane proximal site of cleavage affects a small percentage of the proteins and results in disulfide-linked fragments. The prodomain is apparently cleaved in several positions that are N-terminal of the furin cleavage site. In terms of processing, may be partially sialylated. Phosphorylation increases association with PTKs. As to expression, expressed moderately in pericytes of retina. Expressed in testis and in spermatozoa from the caput, corpus, and cauda epididymis, as well as in non-capacitated and acrosome-reacted sperm (at protein level). Highly expressed in heart, brain, lung, and kidney. Expressed at lower levels in spleen, liver, testis and muscle.

The protein localises to the endomembrane system. The protein resides in the cell junction. Its subcellular location is the adherens junction. It localises to the cell projection. It is found in the cilium. The protein localises to the flagellum. The protein resides in the cytoplasmic vesicle. Its subcellular location is the secretory vesicle. It localises to the acrosome. Active metalloproteinase with gelatinolytic and collagenolytic activity. Plays a role in the wound healing process. Mediates both heterotypic intraepithelial cell/T-cell interactions and homotypic T-cell aggregation. Inhibits beta-1 integrin-mediated cell adhesion and migration of airway smooth muscle cells. Suppresses cell motility on or towards fibronectin possibly by driving alpha-v/beta-1 integrin (ITAGV-ITGB1) cell surface expression via ERK1/2 inactivation. Cleaves E-cadherin in response to growth factor deprivation. Plays a role in glomerular cell migration. Plays a role in pathological neovascularization. May play a role in cartilage remodeling. May be proteolytically processed, during sperm epididymal maturation and the acrosome reaction. May play a role in sperm-egg binding through its disintegrin domain. Interactions with egg membrane could be mediated via binding between the disintegrin-like domain to one or more integrin receptors on the egg. This Mus musculus (Mouse) protein is Disintegrin and metalloproteinase domain-containing protein 15 (Adam15).